Consider the following 512-residue polypeptide: Ribose import ATP-binding protein RbsA 1 (512 aa).

2 consecutive ABC transporter domains span residues 8-244 (FRME…IGRE) and 254-502 (AHRG…LNIA). An ATP-binding site is contributed by 40–47 (GENGAGKS).

It belongs to the ABC transporter superfamily. Ribose importer (TC 3.A.1.2.1) family. As to quaternary structure, the complex is composed of an ATP-binding protein (RbsA), two transmembrane proteins (RbsC) and a solute-binding protein (RbsB).

The protein localises to the cell inner membrane. It catalyses the reaction D-ribose(out) + ATP + H2O = D-ribose(in) + ADP + phosphate + H(+). Part of the ABC transporter complex RbsABC involved in ribose import. Responsible for energy coupling to the transport system. The protein is Ribose import ATP-binding protein RbsA 1 of Rhizobium johnstonii (strain DSM 114642 / LMG 32736 / 3841) (Rhizobium leguminosarum bv. viciae).